The primary structure comprises 156 residues: Low molecular weight protein-tyrosine-phosphatase YfkJ (156 aa).

The active-site Nucleophile is Cys8. Residue Arg14 is part of the active site. Residue Asp125 is the Proton donor of the active site.

This sequence belongs to the low molecular weight phosphotyrosine protein phosphatase family.

It catalyses the reaction O-phospho-L-tyrosyl-[protein] + H2O = L-tyrosyl-[protein] + phosphate. Its activity is regulated as follows. Efficiently inhibited by Cu(2+) ion, Zn(2+) ion and N-ethylmaleimide, while the addition of Mg(2+), Ca(2+) or Fe(3+) ions has minimal effect. Inhibited in a competitive manner by vanadate. In terms of biological role, dephosphorylates the phosphotyrosine-containing proteins. Involved in ethanol stress resistance. The protein is Low molecular weight protein-tyrosine-phosphatase YfkJ (yfkJ) of Bacillus subtilis (strain 168).